Consider the following 502-residue polypeptide: MSQEKYIMAIDQGTTSSRAIIFNKKGEKVSSSQKEFTQIFPQAGWVEHNANEIWNSVQSVIAGAFIESGVKPNQIEAIGITNQRETTVVWDKKTGLPIYNAIVWQSRQTAPLAEQLKSQGYVEKFHEKTGLIIDAYFSATKVRWILDHVEGAQERAEKGELLFGTIDTWLVWKLTDGAAHVTDYSNAARTMLYNIKELKWDDEILEILNIPKAILPEVRSNSEIYGKTAPFHFYGGEVPISGMAGDQQAALFGQLAFEPGMVKNTYGTGSFIIMNTGEEMQLSENNLLTTIGYGINGKVYYALEGSIFIAGSAIQWLRDGLRMVENSPESEKYARDSHNNDEVYVVPAFTGLGAPYWNQNARGSVFGLTRGTSKEDFIKATLQSIAYQVRDIIDTMQVDTQTAIQVLKVDGGAAMNNFLMQFQADILGIDIARAKNLETTALGAAFLAGLSVGYWKDLDELKLLNETGELFEPSMNESRKEQLYKGWKKAVKATQVFAEVDD.

Thr-14 contributes to the ADP binding site. Residues Thr-14, Thr-15, and Ser-16 each coordinate ATP. Sn-glycerol 3-phosphate is bound at residue Thr-14. Arg-18 lines the ADP pocket. Sn-glycerol 3-phosphate contacts are provided by Arg-84, Glu-85, and Tyr-136. Glycerol-binding residues include Arg-84, Glu-85, and Tyr-136. At His-232 the chain carries Phosphohistidine; by HPr. Sn-glycerol 3-phosphate is bound at residue Asp-246. Glycerol contacts are provided by Asp-246 and Gln-247. ADP contacts are provided by Thr-268 and Gly-311. ATP-binding residues include Thr-268, Gly-311, Gln-315, and Gly-412. Residues Gly-412 and Asn-416 each contribute to the ADP site.

Belongs to the FGGY kinase family. In terms of assembly, homotetramer and homodimer (in equilibrium). Post-translationally, the phosphoenolpyruvate-dependent sugar phosphotransferase system (PTS), including enzyme I, and histidine-containing protein (HPr) are required for the phosphorylation, which leads to the activation of the enzyme.

It catalyses the reaction glycerol + ATP = sn-glycerol 3-phosphate + ADP + H(+). The protein operates within polyol metabolism; glycerol degradation via glycerol kinase pathway; sn-glycerol 3-phosphate from glycerol: step 1/1. With respect to regulation, activated by phosphorylation and inhibited by fructose 1,6-bisphosphate (FBP). Its function is as follows. Key enzyme in the regulation of glycerol uptake and metabolism. Catalyzes the phosphorylation of glycerol to yield sn-glycerol 3-phosphate. In Streptococcus pneumoniae serotype 2 (strain D39 / NCTC 7466), this protein is Glycerol kinase.